The sequence spans 155 residues: Protein SprT-like (155 aa).

Positions 7 to 145 (QQHMEEVSLQ…GSCGGRLKQT (139 aa)) constitute a SprT-like domain. His-67 lines the Zn(2+) pocket. Residue Glu-68 is part of the active site. Residue His-71 participates in Zn(2+) binding.

Belongs to the SprT family. Zn(2+) is required as a cofactor.

The protein resides in the cytoplasm. The chain is Protein SprT-like from Listeria innocua serovar 6a (strain ATCC BAA-680 / CLIP 11262).